Reading from the N-terminus, the 615-residue chain is DNA mismatch repair protein MutL (615 aa).

The segment at 363–397 (FAEPAAREPVAPRYTPAPASGSRPAAPWPNAQPGY) is disordered. The segment covering 364-391 (AEPAAREPVAPRYTPAPASGSRPAAPWP) has biased composition (low complexity).

The protein belongs to the DNA mismatch repair MutL/HexB family.

Its function is as follows. This protein is involved in the repair of mismatches in DNA. It is required for dam-dependent methyl-directed DNA mismatch repair. May act as a 'molecular matchmaker', a protein that promotes the formation of a stable complex between two or more DNA-binding proteins in an ATP-dependent manner without itself being part of a final effector complex. This Escherichia coli O8 (strain IAI1) protein is DNA mismatch repair protein MutL.